The sequence spans 708 residues: ARF GTPase-activating protein GIT2 (708 aa).

Residues 1–124 (MSKRLRSSDV…AFVHRLPCRE (124 aa)) enclose the Arf-GAP domain. Residues 11 to 34 (CADCNGPDPSWASVNRGTFICDEC) form a C4-type zinc finger. ANK repeat units follow at residues 132 to 161 (DLSKQLHSSVRTGNLETCLRLLSLGAQANF), 166 to 195 (KGSTPLHVASKAGQILQAELLAVYGADPGT), and 199 to 228 (SGKTPVDYARQGGHHELAERLIEIQYELTD). The segment at 376-592 (STQHSTESQD…SPTLPSTEDV (217 aa)) is disordered. Acidic residues predominate over residues 384–401 (QDNDQPDYDSVASDEDTD). 2 positions are modified to phosphoserine: Ser393 and Ser396. At Thr400 the chain carries Phosphothreonine. A compositionally biased stretch (polar residues) spans 407-438 (SKANRQKLQTLQSENSSLRRQATASACQVQTG). Low complexity predominate over residues 504-518 (TSSSSLPSFPSTLSW). Ser508, Ser511, and Ser519 each carry phosphoserine. Over residues 519-532 (SRDESARRASRLEK) the composition is skewed to basic and acidic residues. Thr536 is subject to Phosphothreonine. At Ser563 the chain carries Phosphoserine.

May form heterooligomers with GIT1. Directly interacts with protein Piccolo/PCLO. Interacts with PPFIA1 and PPFIA2. Interacts with ARHGEF7. Identified in a complex with ARHGEF6 and BIN2. Interacts with PAK3. Interacts with PXN/paxillin. Interacts with TGFB1I1. Forms a complex with EFNB1 and GRB4/NCK2. Tyrosine phosphorylated when coexpressed in cells with PTK2/FAK1 and SRC. As to expression, expressed in the brain (at protein level).

In terms of biological role, GTPase-activating protein for ADP ribosylation factor family members, including ARF1. The protein is ARF GTPase-activating protein GIT2 (Git2) of Mus musculus (Mouse).